Consider the following 406-residue polypeptide: Cysteine desulfurase (406 aa).

Lys226 bears the N6-(pyridoxal phosphate)lysine mark. The active-site Cysteine persulfide intermediate is Cys364.

It belongs to the class-V pyridoxal-phosphate-dependent aminotransferase family. Csd subfamily. As to quaternary structure, homodimer. Interacts with SufE and the SufBCD complex composed of SufB, SufC and SufD. The interaction with SufE is required to mediate the direct transfer of the sulfur atom from the S-sulfanylcysteine. Requires pyridoxal 5'-phosphate as cofactor.

It is found in the cytoplasm. The enzyme catalyses (sulfur carrier)-H + L-cysteine = (sulfur carrier)-SH + L-alanine. It catalyses the reaction L-selenocysteine + AH2 = hydrogenselenide + L-alanine + A + H(+). The protein operates within cofactor biosynthesis; iron-sulfur cluster biosynthesis. Functionally, cysteine desulfurases mobilize the sulfur from L-cysteine to yield L-alanine, an essential step in sulfur metabolism for biosynthesis of a variety of sulfur-containing biomolecules. Component of the suf operon, which is activated and required under specific conditions such as oxidative stress and iron limitation. Acts as a potent selenocysteine lyase in vitro, that mobilizes selenium from L-selenocysteine. Selenocysteine lyase activity is however unsure in vivo. This chain is Cysteine desulfurase, found in Cronobacter sakazakii (strain ATCC BAA-894) (Enterobacter sakazakii).